Reading from the N-terminus, the 205-residue chain is Ras-related protein RABC2b (205 aa).

20–27 (GDSGVGKS) is a GTP binding site. Positions 41–49 (LAPTIGVDF) match the Effector region motif. GTP-binding positions include 67-71 (DTAGQ), 127-130 (NKVD), and 157-158 (SA). Residues cysteine 202 and cysteine 203 are each lipidated (S-geranylgeranyl cysteine).

It belongs to the small GTPase superfamily. Rab family.

The protein resides in the cell membrane. Intracellular vesicle trafficking and protein transport. This chain is Ras-related protein RABC2b (RABC2B), found in Arabidopsis thaliana (Mouse-ear cress).